Here is a 417-residue protein sequence, read N- to C-terminus: Serine hydroxymethyltransferase (417 aa).

Residues Leu121 and 125 to 127 (GHL) each bind (6S)-5,6,7,8-tetrahydrofolate. Lys229 is subject to N6-(pyridoxal phosphate)lysine. Residue 355–357 (SPF) coordinates (6S)-5,6,7,8-tetrahydrofolate.

Belongs to the SHMT family. Homodimer. The cofactor is pyridoxal 5'-phosphate.

Its subcellular location is the cytoplasm. It carries out the reaction (6R)-5,10-methylene-5,6,7,8-tetrahydrofolate + glycine + H2O = (6S)-5,6,7,8-tetrahydrofolate + L-serine. It functions in the pathway one-carbon metabolism; tetrahydrofolate interconversion. The protein operates within amino-acid biosynthesis; glycine biosynthesis; glycine from L-serine: step 1/1. Its function is as follows. Catalyzes the reversible interconversion of serine and glycine with tetrahydrofolate (THF) serving as the one-carbon carrier. This reaction serves as the major source of one-carbon groups required for the biosynthesis of purines, thymidylate, methionine, and other important biomolecules. Also exhibits THF-independent aldolase activity toward beta-hydroxyamino acids, producing glycine and aldehydes, via a retro-aldol mechanism. The protein is Serine hydroxymethyltransferase of Buchnera aphidicola subsp. Baizongia pistaciae (strain Bp).